A 1102-amino-acid polypeptide reads, in one-letter code: MTNLATTMLPDLIEIQHASFHWFLEEGLIEELNSFSPISDYTGKLELHFLGKDYKLKQPKYDVDESKRRDASYSVQMYVPTRLINKETGEIKEQEVFIGDLPLMTERGTFIINGAERVIVNQIVRSPGVYYKKELDKNGRRTYSASLIPNRGAWLKFETDKNGLVYVRIDKTRKLSAQVLLKAIGLSDNEILDSLSHPEFYQKTLDKEGNPTEEEALVELYKKLRPGEPPTVSGGQQLLESRFFDPKRYDLGRVGRYKLNKKLRLNEADTTRVLTPQDILAAINYLINLEFDVGTTDDIDHLGNRRVRSVGELLQNQIRVGLNRLERIIRERMTVSESDALTPASLVNPKPLVAAIKEFFGSSQLSQFMDQTNPLAELTHKRRISALGPGGLTRERAGFAVRDIHPSHHGRICPVETPEGPNAGLIGSLATCARVNDYGFIETPYFRVESGRVRKDLDPVYLTADEEDDMRVAPGDIPTDEEGNIIGESVPIRYRQEFSTTSPEQVDYVAVSPVQIISVATSMIPFLEHDDANRALMGSNMQRQAVPLLRPERPLVGTGLEAQAARDSGMVIVSRTHGIVTYVDATEIRVQPHSPDNPAEKGEEIVYPIQKYQRSNQDTCLNQRPLVYAGEDVVPGQVLADGSATEGGELALGQNILVAYMPWEGYNYEDAILISERLVYDDVYTSIHIEKFEIEARQTKLGPEEITREIPNVGEDALRNLDEHGIIRIGAWVESGDILVGKVTPKGEADQPPEEKLLRAIFGEKARDVRDNSLRVPNGEKGRVVDVRVFTREKGDELPPGANMVVRIYVAQKRKIQVGDKMAGRHGNKGIISRILPIEDMPYLPDGRPIDIALNPLGVPSRMNVGQVFECLLGWAGENLGVRFKITPFDEMYGEEASRDTVHGLLEEASQRPNKDWVFNENHPGKIQVFDGRTGEPFDRPITVGQAYMLKLVHLVDDKIHARSTGPYSLVTQQPLGGKAQQGGQRFGEMEVWALEAYGAAYILQELLTVKSDDMQGRNEALNAIVKGKSIPRPGTPESFKVLMRELQSLGLDIAAHKVQLSEDGESADAEVDLMIDSQRRAPNRPTYESLHTEEDLEEEEV.

The segment at 1076 to 1102 is disordered; that stretch reads IDSQRRAPNRPTYESLHTEEDLEEEEV.

It belongs to the RNA polymerase beta chain family. In terms of assembly, in cyanobacteria the RNAP catalytic core is composed of 2 alpha, 1 beta, 1 beta', 1 gamma and 1 omega subunit. When a sigma factor is associated with the core the holoenzyme is formed, which can initiate transcription.

It carries out the reaction RNA(n) + a ribonucleoside 5'-triphosphate = RNA(n+1) + diphosphate. In terms of biological role, DNA-dependent RNA polymerase catalyzes the transcription of DNA into RNA using the four ribonucleoside triphosphates as substrates. This is DNA-directed RNA polymerase subunit beta from Synechocystis sp. (strain ATCC 27184 / PCC 6803 / Kazusa).